The sequence spans 391 residues: GTPase Obg (391 aa).

Positions 1–159 constitute an Obg domain; that stretch reads MKFIDEALIR…RDLQLELMLL (159 aa). One can recognise an OBG-type G domain in the interval 160-333; it reads ADVGMLGLPN…LTRDIMDFIE (174 aa). GTP contacts are provided by residues 166-173, 191-195, 213-216, 283-286, and 314-316; these read GLPNAGKS, FTTLV, DIPG, NKID, and SAA. Ser173 and Thr193 together coordinate Mg(2+). Residues 361–391 are disordered; it reads QNPITEDDWDDLDDDGWTEEDDEGVEFIYKP. Over residues 365–385 the composition is skewed to acidic residues; sequence TEDDWDDLDDDGWTEEDDEGV.

This sequence belongs to the TRAFAC class OBG-HflX-like GTPase superfamily. OBG GTPase family. Monomer. The cofactor is Mg(2+).

It is found in the cytoplasm. In terms of biological role, an essential GTPase which binds GTP, GDP and possibly (p)ppGpp with moderate affinity, with high nucleotide exchange rates and a fairly low GTP hydrolysis rate. Plays a role in control of the cell cycle, stress response, ribosome biogenesis and in those bacteria that undergo differentiation, in morphogenesis control. This is GTPase Obg from Glaesserella parasuis serovar 5 (strain SH0165) (Haemophilus parasuis).